We begin with the raw amino-acid sequence, 209 residues long: Ion-translocating oxidoreductase complex subunit G (209 aa).

Residues 9 to 29 (GLILAVFACVSTGLVALTYAL) form a helical membrane-spanning segment. Residue Thr175 is modified to FMN phosphoryl threonine.

It belongs to the RnfG family. As to quaternary structure, the complex is composed of six subunits: RnfA, RnfB, RnfC, RnfD, RnfE and RnfG. FMN is required as a cofactor.

The protein localises to the cell inner membrane. In terms of biological role, part of a membrane-bound complex that couples electron transfer with translocation of ions across the membrane. The polypeptide is Ion-translocating oxidoreductase complex subunit G (Vibrio cholerae serotype O1 (strain ATCC 39315 / El Tor Inaba N16961)).